The following is a 142-amino-acid chain: MSWDSYVDNLIAQSKDASGTTHCDKACIIGKDGSAWTTMPTSDTSNNLKLTPEEMANIAKCFKSKDFAAFMSSGIYVNGTKYQFLREEDSKLVLGKKKGEGSLTLQSSKTAIVIGHCPEGGQQGNLNKAVGVIAEYLESLSM.

Belongs to the profilin family. Occurs in many kinds of cells as a complex with monomeric actin in a 1:1 ratio. In terms of tissue distribution, expressed specifically in coelomocytes in response to injury.

The protein localises to the cytoplasm. It localises to the cytoskeleton. Its function is as follows. Binds to actin and affects the structure of the cytoskeleton. At high concentrations, profilin prevents the polymerization of actin, whereas it enhances it at low concentrations. By binding to PIP2, it inhibits the formation of IP3 and DG. In Strongylocentrotus purpuratus (Purple sea urchin), this protein is Profilin.